Here is a 159-residue protein sequence, read N- to C-terminus: Globin CTT-W (159 aa).

A signal peptide spans 1-16 (MKFLVILTLCIAGAIA). One can recognise a Globin domain in the interval 17-159 (HCDKAPFIKA…HHAIVYSILE (143 aa)). The heme b site is built by His73 and His108.

It belongs to the globin family.

The protein is Globin CTT-W (CTT-W) of Chironomus thummi piger (Midge).